The sequence spans 115 residues: Viral Lymphotactin (115 aa).

Residues 1–19 (MRLLTILALCCVAIWVVES) form the signal peptide. C30 and C67 form a disulfide bridge.

The protein belongs to the intercrine gamma family. As to quaternary structure, interacts with host XCR1. N-glycosylated and O-glycosylated.

It localises to the secreted. Functionally, chemoattractant for CD4-dendritic cells, but not for CD4+ dendritic cells, T-cells or B-cells. The sequence is that of Viral Lymphotactin (vXCL1) from Rat cytomegalovirus (isolate England) (RCMV-E).